Reading from the N-terminus, the 116-residue chain is MRHGKAGRKLNRNSSARVALARAQATALLREGRIQTTLTKAKELRPFVEQLITTAKGGDLHSRRLVAQDIHDKDVVRKVMDEVAPKYAERPGGYTRILRVGTRRGDGVTMALIELV.

Belongs to the bacterial ribosomal protein bL17 family. As to quaternary structure, part of the 50S ribosomal subunit. Contacts proteins L3 and L32.

In terms of biological role, binds to the 23S rRNA. This Deinococcus radiodurans (strain ATCC 13939 / DSM 20539 / JCM 16871 / CCUG 27074 / LMG 4051 / NBRC 15346 / NCIMB 9279 / VKM B-1422 / R1) protein is Large ribosomal subunit protein bL17.